Here is a 226-residue protein sequence, read N- to C-terminus: V-type proton ATPase subunit E 1 (226 aa).

Ala2 carries the post-translational modification N-acetylalanine. At Tyr56 the chain carries Phosphotyrosine.

It belongs to the V-ATPase E subunit family. V-ATPase is a heteromultimeric enzyme made up of two complexes: the ATP-hydrolytic V1 complex and the proton translocation V0 complex. The V1 complex consists of three catalytic AB heterodimers that form a heterohexamer, three peripheral stalks each consisting of EG heterodimers, one central rotor including subunits D and F, and the regulatory subunits C and H. The proton translocation complex V0 consists of the proton transport subunit a, a ring of proteolipid subunits c9c'', rotary subunit d, subunits e and f, and the accessory subunits ATP6AP1/Ac45 and ATP6AP2/PRR. Interacts with RABL2/RABL2A; binds preferentially to GTP-bound RABL2. Interacts with ALDOC. Interacts with RAB11B. In terms of tissue distribution, expressed in brain (at protein level).

The protein resides in the apical cell membrane. It is found in the cytoplasmic vesicle. It localises to the secretory vesicle. Its subcellular location is the synaptic vesicle membrane. The protein localises to the clathrin-coated vesicle membrane. In terms of biological role, subunit of the V1 complex of vacuolar(H+)-ATPase (V-ATPase), a multisubunit enzyme composed of a peripheral complex (V1) that hydrolyzes ATP and a membrane integral complex (V0) that translocates protons. V-ATPase is responsible for acidifying and maintaining the pH of intracellular compartments and in some cell types, is targeted to the plasma membrane, where it is responsible for acidifying the extracellular environment. This Rattus norvegicus (Rat) protein is V-type proton ATPase subunit E 1 (Atp6v1e1).